A 279-amino-acid polypeptide reads, in one-letter code: Urease accessory protein UreD (279 aa).

The protein belongs to the UreD family. In terms of assembly, ureD, UreF and UreG form a complex that acts as a GTP-hydrolysis-dependent molecular chaperone, activating the urease apoprotein by helping to assemble the nickel containing metallocenter of UreC. The UreE protein probably delivers the nickel.

It is found in the cytoplasm. Required for maturation of urease via the functional incorporation of the urease nickel metallocenter. The sequence is that of Urease accessory protein UreD from Rhodopseudomonas palustris (strain HaA2).